The chain runs to 257 residues: MARKWLNLFAGAALSFAVAGNALADEGKITVFAAASLTNAMQDIATQFKKEKGVDVVSSFASSSTLARQIEAGAPADLFISADQKWMDYAVDKKAIDTATRQTLLGNSLVVVAPKASVQKDFTIDSKTNWTSLLNGGRLAVGDPEHVPAGIYAKEALQKLGAWDTLSPKLAPAEDVRGALALVERNEAPLGIVYGSDAVASKGVKVVATFPEDSHKKVEYPVAVVEGHNNATVKAFYDYLKGPQAAEIFKRYGFTIK.

The N-terminal stretch at 1–24 is a signal peptide; that stretch reads MARKWLNLFAGAALSFAVAGNALA. The molybdate site is built by Ser36, Ser63, Ala149, Val176, and Tyr194.

It belongs to the bacterial solute-binding protein ModA family. In terms of assembly, the complex is composed of two ATP-binding proteins (ModC), two transmembrane proteins (ModB) and a solute-binding protein (ModA).

The protein resides in the periplasm. In terms of biological role, part of the ABC transporter complex ModABC involved in the transport of molybdenum into the cell. Binds molybdate with high affinity in vitro and with a similar affinity in vivo. Binds tungstate with high affinity in vitro. Binds unnatural anion perrhenate with high affinity in vitro. Does not bind sulfate, phosphate, arsenate, selenate, chlorate, metavanadate, nitrate, perchlorate, permanganate or carbonate. The chain is Molybdate-binding protein ModA (modA) from Escherichia coli (strain K12).